The sequence spans 41 residues: Photosystem I reaction center subunit IX (41 aa).

Residues 7–27 (YLSTAPVITAIWLGITAGILI) traverse the membrane as a helical segment.

It belongs to the PsaJ family.

It localises to the cellular thylakoid membrane. Functionally, may help in the organization of the PsaE and PsaF subunits. This chain is Photosystem I reaction center subunit IX, found in Cyanothece sp. (strain PCC 7425 / ATCC 29141).